We begin with the raw amino-acid sequence, 201 residues long: MTAPVIGVLALQGDVREHTAALAAAGADARPVRRPKELETVDGLVIPGGESTTISRLVDLFELREPIDKRIADGMPVYGSCAGMIMLASEVLDGRSDQRGFAGIEMTVRRNAFGRQIASFEAPVSMAGIDGDPLHVLFIRAPWVERVGRGVEVLGTVAEGPAAGRIVAVRQGNLLATSFHPELTDDRRLHAYFADLVRAAI.

Position 49–51 (49–51 (GES)) interacts with L-glutamine. The active-site Nucleophile is Cys81. Residues Arg110 and 139–140 (IR) contribute to the L-glutamine site. Active-site charge relay system residues include His180 and Glu182.

This sequence belongs to the glutaminase PdxT/SNO family. As to quaternary structure, in the presence of PdxS, forms a dodecamer of heterodimers. Only shows activity in the heterodimer.

The catalysed reaction is aldehydo-D-ribose 5-phosphate + D-glyceraldehyde 3-phosphate + L-glutamine = pyridoxal 5'-phosphate + L-glutamate + phosphate + 3 H2O + H(+). The enzyme catalyses L-glutamine + H2O = L-glutamate + NH4(+). It functions in the pathway cofactor biosynthesis; pyridoxal 5'-phosphate biosynthesis. Its function is as follows. Catalyzes the hydrolysis of glutamine to glutamate and ammonia as part of the biosynthesis of pyridoxal 5'-phosphate. The resulting ammonia molecule is channeled to the active site of PdxS. This is Pyridoxal 5'-phosphate synthase subunit PdxT from Salinispora tropica (strain ATCC BAA-916 / DSM 44818 / JCM 13857 / NBRC 105044 / CNB-440).